The following is a 475-amino-acid chain: Putative aldehyde dehydrogenase SSP0762 (475 aa).

Gly201–Gly207 is an NAD(+) binding site. Catalysis depends on residues Glu245 and Cys279.

The protein belongs to the aldehyde dehydrogenase family.

It catalyses the reaction an aldehyde + NAD(+) + H2O = a carboxylate + NADH + 2 H(+). This Staphylococcus saprophyticus subsp. saprophyticus (strain ATCC 15305 / DSM 20229 / NCIMB 8711 / NCTC 7292 / S-41) protein is Putative aldehyde dehydrogenase SSP0762.